The primary structure comprises 124 residues: Large ribosomal subunit protein bL12 (124 aa).

Residues 102-116 (MSKEDAEAAKTKLEE) are compositionally biased toward basic and acidic residues. Residues 102–124 (MSKEDAEAAKTKLEEAGASVELK) are disordered.

The protein belongs to the bacterial ribosomal protein bL12 family. As to quaternary structure, homodimer. Part of the ribosomal stalk of the 50S ribosomal subunit. Forms a multimeric L10(L12)X complex, where L10 forms an elongated spine to which 2 to 4 L12 dimers bind in a sequential fashion. Binds GTP-bound translation factors.

In terms of biological role, forms part of the ribosomal stalk which helps the ribosome interact with GTP-bound translation factors. Is thus essential for accurate translation. This chain is Large ribosomal subunit protein bL12, found in Chromohalobacter salexigens (strain ATCC BAA-138 / DSM 3043 / CIP 106854 / NCIMB 13768 / 1H11).